A 299-amino-acid chain; its full sequence is Coenzyme PQQ synthesis protein B (299 aa).

The protein belongs to the PqqB family.

The protein operates within cofactor biosynthesis; pyrroloquinoline quinone biosynthesis. Its function is as follows. May be involved in the transport of PQQ or its precursor to the periplasm. This is Coenzyme PQQ synthesis protein B from Xanthomonas euvesicatoria pv. vesicatoria (strain 85-10) (Xanthomonas campestris pv. vesicatoria).